Here is a 357-residue protein sequence, read N- to C-terminus: D-alanine--D-alanine ligase A (357 aa).

The 206-residue stretch at 143–348 (KRLLREAGLA…YSKVIDVLIE (206 aa)) folds into the ATP-grasp domain. 171 to 226 (AGALGLPFFAKPARQGSSFGVSKVHDRDGFEQAVETALRYDSKALIEEFVDGREIE) is a binding site for ATP. Mg(2+)-binding residues include Asp302, Glu315, and Asn317.

The protein belongs to the D-alanine--D-alanine ligase family. The cofactor is Mg(2+). Requires Mn(2+) as cofactor.

Its subcellular location is the cytoplasm. It carries out the reaction 2 D-alanine + ATP = D-alanyl-D-alanine + ADP + phosphate + H(+). It participates in cell wall biogenesis; peptidoglycan biosynthesis. Functionally, cell wall formation. This Mesorhizobium japonicum (strain LMG 29417 / CECT 9101 / MAFF 303099) (Mesorhizobium loti (strain MAFF 303099)) protein is D-alanine--D-alanine ligase A.